The following is a 919-amino-acid chain: Phosphoenolpyruvate carboxylase (919 aa).

Residues H138 and K579 contribute to the active site.

This sequence belongs to the PEPCase type 1 family. Mg(2+) is required as a cofactor.

It catalyses the reaction oxaloacetate + phosphate = phosphoenolpyruvate + hydrogencarbonate. In terms of biological role, forms oxaloacetate, a four-carbon dicarboxylic acid source for the tricarboxylic acid cycle. This Corynebacterium glutamicum (Brevibacterium saccharolyticum) protein is Phosphoenolpyruvate carboxylase.